Consider the following 532-residue polypeptide: Flavin-containing monooxygenase 1 (532 aa).

Ala2 bears the N-acetylalanine mark. Topologically, residues 2–510 (AKRVAIVGAG…TRIVKESPSP (509 aa)) are lumenal. FAD-binding positions include 9–13 (GAGVS), Glu32, 40–41 (LW), and 61–62 (NS). 60-61 (SN) is a binding site for NADP(+). Asn120 is a glycosylation site (N-linked (GlcNAc...) (high mannose) asparagine). NADP(+) is bound at residue 195-198 (SGTD). Residues 511–531 (FASLLKLFSFLALLVAIFQIF) traverse the membrane as a helical segment. Position 532 (Leu532) is a topological domain, cytoplasmic.

Belongs to the FMO family. FAD serves as cofactor. In terms of tissue distribution, liver.

It localises to the endoplasmic reticulum membrane. It catalyses the reaction hypotaurine + NADPH + O2 + H(+) = taurine + NADP(+) + H2O. The catalysed reaction is hypotaurine + NADH + O2 + H(+) = taurine + NAD(+) + H2O. It carries out the reaction trimethylamine + NADPH + O2 = trimethylamine N-oxide + NADP(+) + H2O. The enzyme catalyses N,N-dimethylaniline + NADPH + O2 + H(+) = N,N-dimethylaniline N-oxide + NADP(+) + H2O. Broad spectrum monooxygenase that catalyzes the oxygenation of a wide variety of nitrogen- and sulfur-containing compounds including xenobiotics. Catalyzes the S-oxygenation of hypotaurine to produce taurine, an organic osmolyte involved in cell volume regulation as well as a variety of cytoprotective and developmental processes. In vitro, catalyzes the N-oxygenation of trimethylamine (TMA) to produce trimethylamine N-oxide (TMAO) and could therefore participate to the detoxification of this compound that is generated by the action of gut microbiota from dietary precursors such as choline, choline containing compounds, betaine or L-carnitine. In Sus scrofa (Pig), this protein is Flavin-containing monooxygenase 1 (FMO1).